The primary structure comprises 312 residues: Olfactory receptor 2J2 (312 aa).

Residues 1-26 are Extracellular-facing; that stretch reads MMIKKNASSEDFFILLGFSNWPQLEV. Residue N6 is glycosylated (N-linked (GlcNAc...) asparagine). A helical transmembrane segment spans residues 27–50; the sequence is VLFVVILIFYLMTLTGNLFIIILS. The Cytoplasmic segment spans residues 51–58; sequence YVDSHLHT. A helical membrane pass occupies residues 59–80; the sequence is PMYFFLSNLSFLDLCHTTSSIP. Topologically, residues 81–101 are extracellular; that stretch reads QLLVNLRGPEKTISYAGCMVQ. Residues C98 and C190 are joined by a disulfide bond. Residues 102 to 121 form a helical membrane-spanning segment; sequence LYFVLALGIAECVLLVVMSY. Over 122-140 the chain is Cytoplasmic; that stretch reads DRYVAVCRPLHYTVLMHPR. Residues 141 to 159 form a helical membrane-spanning segment; that stretch reads FCHLLAAASWVIGFTISAL. Residues 160-196 lie on the Extracellular side of the membrane; the sequence is HSSFTFWVPLCGHRLVDHFFCEVPALLRLSCVDTHAN. The helical transmembrane segment at 197 to 220 threads the bilayer; the sequence is ELTLMVMSSIFVLIPLILILTAYG. Residues 221 to 237 are Cytoplasmic-facing; it reads AIARAVLSMQSTTGLQK. The chain crosses the membrane as a helical span at residues 238 to 260; sequence VFRTCGAHLMVVSLFFIPVMCMY. Residues 261–273 lie on the Extracellular side of the membrane; sequence LQPPSENSPDQGK. Residues 274–293 traverse the membrane as a helical segment; that stretch reads FIALFYTVVTPSLNPLIYTL. At 294-312 the chain is on the cytoplasmic side; sequence RNKHVKGAAKRLLGWEWGK.

It belongs to the G-protein coupled receptor 1 family.

The protein localises to the cell membrane. Its function is as follows. Odorant receptor. In Homo sapiens (Human), this protein is Olfactory receptor 2J2 (OR2J2).